A 338-amino-acid chain; its full sequence is Phenylalanine--tRNA ligase alpha subunit (338 aa).

Mg(2+) is bound at residue glutamate 253.

It belongs to the class-II aminoacyl-tRNA synthetase family. Phe-tRNA synthetase alpha subunit type 1 subfamily. Tetramer of two alpha and two beta subunits. It depends on Mg(2+) as a cofactor.

Its subcellular location is the cytoplasm. It carries out the reaction tRNA(Phe) + L-phenylalanine + ATP = L-phenylalanyl-tRNA(Phe) + AMP + diphosphate + H(+). The chain is Phenylalanine--tRNA ligase alpha subunit from Citrifermentans bemidjiense (strain ATCC BAA-1014 / DSM 16622 / JCM 12645 / Bem) (Geobacter bemidjiensis).